Here is a 357-residue protein sequence, read N- to C-terminus: Inositol-tetrakisphosphate 1-kinase 3 (357 aa).

Positions 56 and 98 each coordinate 1D-myo-inositol 1,3,4-trisphosphate. The ATP site is built by Arg133 and Lys183. Residues His190 and Lys222 each coordinate 1D-myo-inositol 1,3,4-trisphosphate. Residues 211–222 (QEFVNHGGVLFK), Ser237, and Ser262 each bind ATP. Mg(2+) is bound by residues Asp302, Asp317, and Asn319. Asn319 contacts 1D-myo-inositol 1,3,4-trisphosphate.

It belongs to the ITPK1 family. Monomer. Mg(2+) serves as cofactor. In terms of tissue distribution, expressed in roots, leaves, flowers, anthers and embryos.

It catalyses the reaction 1D-myo-inositol 3,4,5,6-tetrakisphosphate + ATP = 1D-myo-inositol 1,3,4,5,6-pentakisphosphate + ADP + H(+). It carries out the reaction 1D-myo-inositol 1,3,4-trisphosphate + ATP = 1D-myo-inositol 1,3,4,5-tetrakisphosphate + ADP + H(+). The catalysed reaction is 1D-myo-inositol 1,3,4-trisphosphate + ATP = 1D-myo-inositol 1,3,4,6-tetrakisphosphate + ADP + H(+). Its function is as follows. Kinase that can phosphorylate various inositol polyphosphate such as Ins(3,4,5,6)P4 or Ins(1,3,4)P3 and participates in phytic acid biosynthesis in developing seeds. Phytic acid is the primary storage form of phosphorus in cereal grains and other plant seeds. The sequence is that of Inositol-tetrakisphosphate 1-kinase 3 from Oryza sativa subsp. japonica (Rice).